The following is a 309-amino-acid chain: tRNA-cytidine(32) 2-sulfurtransferase (309 aa).

Positions Ser47–Ser52 match the PP-loop motif motif. Cys122, Cys125, and Cys213 together coordinate [4Fe-4S] cluster.

Belongs to the TtcA family. Homodimer. Mg(2+) serves as cofactor. The cofactor is [4Fe-4S] cluster.

Its subcellular location is the cytoplasm. The catalysed reaction is cytidine(32) in tRNA + S-sulfanyl-L-cysteinyl-[cysteine desulfurase] + AH2 + ATP = 2-thiocytidine(32) in tRNA + L-cysteinyl-[cysteine desulfurase] + A + AMP + diphosphate + H(+). Its pathway is tRNA modification. Catalyzes the ATP-dependent 2-thiolation of cytidine in position 32 of tRNA, to form 2-thiocytidine (s(2)C32). The sulfur atoms are provided by the cysteine/cysteine desulfurase (IscS) system. The polypeptide is tRNA-cytidine(32) 2-sulfurtransferase (Erwinia tasmaniensis (strain DSM 17950 / CFBP 7177 / CIP 109463 / NCPPB 4357 / Et1/99)).